Here is a 459-residue protein sequence, read N- to C-terminus: WPP domain-interacting protein 3 (459 aa).

A compositionally biased stretch (polar residues) spans 1–17 (MNESVPDSVEDNGNSVP). A disordered region spans residues 1–78 (MNESVPDSVE…GPVRDEAAPV (78 aa)). Basic residues predominate over residues 52–66 (STRKGFGLKKWRRIK). 2 consecutive short sequence motifs (nuclear localization signal) follow at residues 60 to 61 (KK) and 63 to 64 (RR). Residues 67-78 (RDGPVRDEAAPV) show a composition bias toward basic and acidic residues. The Nuclear localization signal 3 motif lies at 86–87 (KR). 2 disordered regions span residues 240 to 266 (KEEV…NNNH) and 308 to 330 (TDEL…TSSG). The span at 251 to 266 (NGNKEDDGESKKNNNH) shows a compositional bias: basic and acidic residues. The segment covering 308-319 (TDELSSDQPSHQ) has biased composition (polar residues). A coiled-coil region spans residues 331–375 (SKALILKEKVKLLEHKLEEARAALEAKEARIQELENSKIESELEC). The region spanning 426-459 (KLGFYILTQLILLVSILRFLVLQFSPASRLVIPT) is the KASH domain. Residues 427 to 447 (LGFYILTQLILLVSILRFLVL) traverse the membrane as a helical segment.

Component of Ran complexes at least composed of WIT1 or WIT2, RANGAP1 or RANGAP2, and WIP1 or WIP2 or WIP3. Interacts with RANGAP1, WPP1/MAF1, and WPP2/MAF2. Interacts with SUN1 and SUN2. Core component of the LINC complex which is composed of inner nuclear membrane SUN domain-containing proteins coupled to outer nuclear membrane WIP and WIT proteins. The LINC complex also involves nucleoskeletal proteins CRWN/LINC and possibly KAKU4 and the cytoskeletal myosin KAKU1. Interacts with WIT2. Expressed in seedlings, roots, stems, leaves, and flowers.

It is found in the nucleus envelope. It localises to the nucleus membrane. Functionally, mediates and enhances the nuclear envelope docking of RANGAP proteins mediated by WIT1 and WIT2 in the undifferentiated cells of root tips. As component of the SUN-WIP-WIT2-KAKU1 complex, mediates the transfer of cytoplasmic forces to the nuclear envelope (NE), leading to nuclear shape changes. The chain is WPP domain-interacting protein 3 (WIP3) from Arabidopsis thaliana (Mouse-ear cress).